A 349-amino-acid polypeptide reads, in one-letter code: Aquaporin-4 (349 aa).

2 consecutive transmembrane segments (helical) span residues 92 to 112 (LSES…AATA) and 125 to 147 (AFYH…GGLL). An NPA 1 motif is present at residues 148 to 150 (NPA). A helical transmembrane segment spans residues 167–187 (LIYMSAQYFGAFIASAVVYLI). N-linked (GlcNAc...) asparagine glycosylation is found at asparagine 194 and asparagine 207. Transmembrane regions (helical) follow at residues 225 to 245 (GAIF…LSIC) and 256 to 276 (MFPF…SYSA). The NPA 2 signature appears at 281–283 (NPA). A helical transmembrane segment spans residues 314–334 (WLFPYVGALLGGVIYEIFIGI).

The protein belongs to the MIP/aquaporin (TC 1.A.8) family.

It localises to the cell membrane. Functionally, aquaglyceroporin that may modulate the water content and osmolytes during anhydrobiosis. The chain is Aquaporin-4 from Milnesium tardigradum (Water bear).